We begin with the raw amino-acid sequence, 152 residues long: Biotin carboxyl carrier protein of acetyl-CoA carboxylase (152 aa).

The Biotinyl-binding domain occupies 72–148 (IIDILSPISG…TKNQVLMKII (77 aa)). At Lys114 the chain carries N6-biotinyllysine.

The protein resides in the plastid. Its subcellular location is the chloroplast. The protein operates within lipid metabolism; fatty acid biosynthesis. Its function is as follows. This protein is a component of the acetyl coenzyme A carboxylase complex; first, biotin carboxylase catalyzes the carboxylation of the carrier protein and then the transcarboxylase transfers the carboxyl group to form malonyl-CoA. The chain is Biotin carboxyl carrier protein of acetyl-CoA carboxylase (accB) from Cyanidium caldarium (Red alga).